A 192-amino-acid chain; its full sequence is MTEYILLIISTALINNFVLVKFLGLCPFMGVSKKIETAIGMSLATMFVLTVASISAYLIDTYILTPLSATFLRTLVFILVIAVVVQFTEMVINKTSPTLYRLLGIFLPLITTNCAVLGVALLNINQAHTLTQSVIYGFGASLGFGLVLVLFAALRERLAAADVPHVFKGASIALITAGLMSLAFMGFTGLVR.

6 helical membrane passes run 5–25 (ILLIISTALINNFVLVKFLGL), 39–59 (IGMSLATMFVLTVASISAYLI), 63–83 (ILTPLSATFLRTLVFILVIAV), 102–122 (LLGIFLPLITTNCAVLGVALL), 134–154 (VIYGFGASLGFGLVLVLFAAL), and 171–191 (SIALITAGLMSLAFMGFTGLV).

Belongs to the NqrDE/RnfAE family. The complex is composed of six subunits: RnfA, RnfB, RnfC, RnfD, RnfE and RnfG.

The protein localises to the cell inner membrane. In terms of biological role, part of a membrane-bound complex that couples electron transfer with translocation of ions across the membrane. The polypeptide is Ion-translocating oxidoreductase complex subunit A (Pasteurella multocida (strain Pm70)).